Consider the following 278-residue polypeptide: Nudix hydrolase 2 (278 aa).

One can recognise a Nudix hydrolase domain in the interval 110–242 (SHRVGIGAFV…ELLRYMTDIC (133 aa)). Residues 147–168 (GVVNEGEDIHDGSVREVKEETG) carry the Nudix box motif. Residue Glu162 participates in Mg(2+) binding. Glu165 (proton acceptor) is an active-site residue. Glu166 lines the Mg(2+) pocket.

The protein belongs to the Nudix hydrolase family. Mg(2+) is required as a cofactor. Mn(2+) serves as cofactor. Expressed in roots, stems and leaves.

It carries out the reaction ADP-D-ribose + H2O = D-ribose 5-phosphate + AMP + 2 H(+). The enzyme catalyses NAD(+) + H2O = beta-nicotinamide D-ribonucleotide + AMP + 2 H(+). The catalysed reaction is NADH + H2O = reduced beta-nicotinamide D-ribonucleotide + AMP + 2 H(+). In terms of biological role, probably mediates the hydrolysis of some nucleoside diphosphate derivatives. In vitro, it can use both NADH and ADP-ribose as substrates; however the relevance of such substrates in vivo is unclear. Confers tolerance to oxidative stress. The sequence is that of Nudix hydrolase 2 from Arabidopsis thaliana (Mouse-ear cress).